The following is a 130-amino-acid chain: Anti-adapter protein IraD (130 aa).

The protein belongs to the GpW/Gp25 family. IraD subfamily. Interacts with RssB.

Its subcellular location is the cytoplasm. Its function is as follows. Inhibits RpoS proteolysis by regulating RssB activity, thereby increasing the stability of the sigma stress factor RpoS during oxidative stress. Its effect on RpoS stability is due to its interaction with RssB, which probably blocks the interaction of RssB with RpoS, and the consequent delivery of the RssB-RpoS complex to the ClpXP protein degradation pathway. This is Anti-adapter protein IraD from Escherichia coli O7:K1 (strain IAI39 / ExPEC).